A 208-amino-acid chain; its full sequence is Cell death-inducing p53-target protein 1 (208 aa).

Composition is skewed to pro residues over residues 1–13 (MSSEPPPPYPGGP) and 36–67 (MQPPPGMPLPPADIGPPPYEPPGHPMPQPGFI). The tract at residues 1–71 (MSSEPPPPYP…PQPGFIPPHM (71 aa)) is disordered. Positions 122 to 206 (ATTVTVLQGE…CKAYIYTYKR (85 aa)) constitute an LITAF domain. The Zn(2+) site is built by C142 and C145. Positions 164–184 (LGFFCCFMGCDLGCCLIPCLI) are membrane-binding amphipathic helix. Zn(2+) is bound by residues C194 and C197.

This sequence belongs to the CDIP1/LITAF family. Highly expressed in brain. Expressed at lower level in heart, skeletal muscle, kidney, pancreas and liver. Weakly or not expressed in placenta and lung.

It localises to the late endosome membrane. The protein localises to the lysosome membrane. Functionally, acts as an important p53/TP53-apoptotic effector. Regulates TNF-alpha-mediated apoptosis in a p53/TP53-dependent manner. The chain is Cell death-inducing p53-target protein 1 (CDIP1) from Homo sapiens (Human).